The primary structure comprises 459 residues: NADH-ubiquinone oxidoreductase chain 4 (459 aa).

13 consecutive transmembrane segments (helical) span residues 22 to 42 (HLSY…LQWL), 61 to 81 (PIST…ILVS), 94 to 113 (RTFT…AFSA), 114 to 134 (LEMM…LIII), 146 to 166 (AGTY…IALT), 197 to 217 (WFAL…HLWL), 225 to 245 (PIAG…YGII), 258 to 278 (LSYP…LICL), 285 to 304 (SLIA…AALL), 308 to 330 (LSIT…LFCL), 352 to 372 (LLPL…ALPP), 380 to 400 (LTII…TGLG), and 437 to 457 (LIMM…QLMT).

The protein belongs to the complex I subunit 4 family.

Its subcellular location is the mitochondrion membrane. It carries out the reaction a ubiquinone + NADH + 5 H(+)(in) = a ubiquinol + NAD(+) + 4 H(+)(out). Core subunit of the mitochondrial membrane respiratory chain NADH dehydrogenase (Complex I) that is believed to belong to the minimal assembly required for catalysis. Complex I functions in the transfer of electrons from NADH to the respiratory chain. The immediate electron acceptor for the enzyme is believed to be ubiquinone. The sequence is that of NADH-ubiquinone oxidoreductase chain 4 (MT-ND4) from Pelomedusa subrufa (African side-necked turtle).